We begin with the raw amino-acid sequence, 100 residues long: Large ribosomal subunit protein bL28 (100 aa).

It belongs to the bacterial ribosomal protein bL28 family.

This is Large ribosomal subunit protein bL28 from Ehrlichia ruminantium (strain Gardel).